A 396-amino-acid chain; its full sequence is Interleukin-3 receptor subunit alpha (396 aa).

The first 16 residues, 1-16, serve as a signal peptide directing secretion; the sequence is MAANLWLILGLLASHS. Over 17–331 the chain is Extracellular; it reads SDLAAVREAP…VCPPEVMPVK (315 aa). 5 disulfide bridges follow: cysteine 62/cysteine 79, cysteine 87/cysteine 223, cysteine 125/cysteine 134, cysteine 165/cysteine 187, and cysteine 245/cysteine 323. N-linked (GlcNAc...) asparagine glycosylation is present at asparagine 91. N-linked (GlcNAc...) asparagine glycans are attached at residues asparagine 213, asparagine 246, asparagine 272, and asparagine 283. The short motif at 312–316 is the WSXWS motif element; the sequence is LSSWS. Residues 332–355 form a helical membrane-spanning segment; that stretch reads TALVTSVATVLGAGLVAAGLLLWW. Topologically, residues 356–396 are cytoplasmic; it reads RKSLLYRLCPPIPRLRLPLAGEMVVWEPALEDCEVTPVTDA. A Glycyl lysine isopeptide (Lys-Gly) (interchain with G-Cter in ubiquitin) cross-link involves residue lysine 357. Residues 363 to 371 carry the Box 1 motif motif; that stretch reads LCPPIPRLR.

This sequence belongs to the type I cytokine receptor family. Type 5 subfamily. As to quaternary structure, interacts with IL3. Heterodimer of an alpha and a beta subunit. The beta subunit is common to the IL3, IL5 and GM-CSF receptors. Post-translationally, ubiquitinated at Lys-357 by RNFT2 in response to IL3. Ubiquitination leads ligand-induced degradation by the proteasome. Ubiquitinated by RNF128 via 'Lys-27'-linked polyubiquitination, facilitating its degradation through the lysosomal pathway.

It is found in the cell membrane. Its subcellular location is the endomembrane system. Cell surface receptor for IL3 expressed on hematopoietic progenitor cells, monocytes and B-lymphocytes that controls the production and differentiation of hematopoietic progenitor cells into lineage-restricted cells. Ligand stimulation rapidly induces hetrodimerization with IL3RB, phosphorylation and enzyme activity of effector proteins such as JAK2 and PI3K that play a role in signaling cell proliferation and differentiation. Activation of JAK2 leads to STAT5-mediated transcriptional program. The chain is Interleukin-3 receptor subunit alpha (Il3ra) from Mus musculus (Mouse).